Consider the following 212-residue polypeptide: 2,3-bisphosphoglycerate-dependent phosphoglycerate mutase (212 aa).

Substrate is bound by residues 9-16 (RHGQSEWN), 22-23 (TG), arginine 61, 88-91 (ERDY), lysine 99, 115-116 (RR), and 159-160 (GN). The active-site Tele-phosphohistidine intermediate is the histidine 10. Glutamate 88 acts as the Proton donor/acceptor in catalysis.

The protein belongs to the phosphoglycerate mutase family. BPG-dependent PGAM subfamily. In terms of assembly, homodimer.

It catalyses the reaction (2R)-2-phosphoglycerate = (2R)-3-phosphoglycerate. It participates in carbohydrate degradation; glycolysis; pyruvate from D-glyceraldehyde 3-phosphate: step 3/5. In terms of biological role, catalyzes the interconversion of 2-phosphoglycerate and 3-phosphoglycerate. In Methylorubrum extorquens (strain CM4 / NCIMB 13688) (Methylobacterium extorquens), this protein is 2,3-bisphosphoglycerate-dependent phosphoglycerate mutase.